The following is a 494-amino-acid chain: Inositol-trisphosphate 3-kinase homolog (494 aa).

ATP is bound by residues serine 206, lysine 218, 260–262 (EDL), and aspartate 276. Substrate contacts are provided by residues lysine 278 and 322 to 329 (KLRYMQFR). Positions 346 and 426 each coordinate ATP. A substrate-binding site is contributed by lysine 429.

This sequence belongs to the inositol phosphokinase (IPK) family. Expressed in spermatheca.

It carries out the reaction 1D-myo-inositol 1,4,5-trisphosphate + ATP = 1D-myo-inositol 1,3,4,5-tetrakisphosphate + ADP + H(+). Its activity is regulated as follows. Unlike mammalian IP3K, may not be regulated by calmodulin. In terms of biological role, probably by regulating inositol 1,4,5-trisphosphate levels, negatively regulates posterior body wall muscle contractions required for defecation and let-23 signaling pathway that controls spermathecal dilation and ovulation. May also regulate ovulation downstream of actin cross-linker fln-1. This Caenorhabditis elegans protein is Inositol-trisphosphate 3-kinase homolog.